The chain runs to 141 residues: Organic hydroperoxide resistance protein-like 1 (141 aa).

Residues 1–20 (MAVNYETKATNTGGRNGHVQ) form a disordered region.

This sequence belongs to the OsmC/Ohr family.

The chain is Organic hydroperoxide resistance protein-like 1 from Staphylococcus saprophyticus subsp. saprophyticus (strain ATCC 15305 / DSM 20229 / NCIMB 8711 / NCTC 7292 / S-41).